Consider the following 303-residue polypeptide: Putative F-box protein At5g62060 (303 aa).

Residues 27 to 74 (KSRYIDIPLDITVEILKKLPAKSLVRFQCVSKQWSTIIGSRRDFIDSI) enclose the F-box domain.

The protein is Putative F-box protein At5g62060 of Arabidopsis thaliana (Mouse-ear cress).